We begin with the raw amino-acid sequence, 360 residues long: Photosystem II protein D1 3 (360 aa).

The next 3 membrane-spanning stretches (helical) occupy residues 29 to 46, 118 to 133, and 142 to 156; these read YVGWFGVLMIPTLLAATV, HFLIGCACYLGRQWEL, and WICVAYSAPLASATA. Histidine 118 serves as a coordination point for chlorophyll a. Residue tyrosine 126 coordinates pheophytin a. Aspartate 170 and glutamate 189 together coordinate [CaMn4O5] cluster. The helical transmembrane segment at 197-218 threads the bilayer; the sequence is FHMLGVAGVFGGSLFSAMHGSL. Histidine 198 is a chlorophyll a binding site. A quinone contacts are provided by residues histidine 215 and 264 to 265; that span reads SF. Histidine 215 is a binding site for Fe cation. Histidine 272 serves as a coordination point for Fe cation. Residues 274 to 288 traverse the membrane as a helical segment; the sequence is FLAAWPVIGIWFTAL. Histidine 332, glutamate 333, aspartate 342, and alanine 344 together coordinate [CaMn4O5] cluster. A propeptide spanning residues 345 to 360 is cleaved from the precursor; sequence AGEVAPVALTAPAING.

This sequence belongs to the reaction center PufL/M/PsbA/D family. In terms of assembly, PSII is composed of 1 copy each of membrane proteins PsbA, PsbB, PsbC, PsbD, PsbE, PsbF, PsbH, PsbI, PsbJ, PsbK, PsbL, PsbM, PsbT, PsbX, PsbY, PsbZ, Psb30/Ycf12, peripheral proteins PsbO, CyanoQ (PsbQ), PsbU, PsbV and a large number of cofactors. It forms dimeric complexes. It depends on The D1/D2 heterodimer binds P680, chlorophylls that are the primary electron donor of PSII, and subsequent electron acceptors. It shares a non-heme iron and each subunit binds pheophytin, quinone, additional chlorophylls, carotenoids and lipids. D1 provides most of the ligands for the Mn4-Ca-O5 cluster of the oxygen-evolving complex (OEC). There is also a Cl(-1) ion associated with D1 and D2, which is required for oxygen evolution. The PSII complex binds additional chlorophylls, carotenoids and specific lipids. as a cofactor. Tyr-161 forms a radical intermediate that is referred to as redox-active TyrZ, YZ or Y-Z. Post-translationally, C-terminally processed by CtpA; processing is essential to allow assembly of the oxygen-evolving complex and thus photosynthetic growth.

It is found in the cellular thylakoid membrane. It catalyses the reaction 2 a plastoquinone + 4 hnu + 2 H2O = 2 a plastoquinol + O2. Its function is as follows. Photosystem II (PSII) is a light-driven water:plastoquinone oxidoreductase that uses light energy to abstract electrons from H(2)O, generating O(2) and a proton gradient subsequently used for ATP formation. It consists of a core antenna complex that captures photons, and an electron transfer chain that converts photonic excitation into a charge separation. The D1/D2 (PsbA/PsbD) reaction center heterodimer binds P680, the primary electron donor of PSII as well as several subsequent electron acceptors. This Trichormus variabilis (strain ATCC 29413 / PCC 7937) (Anabaena variabilis) protein is Photosystem II protein D1 3.